A 1343-amino-acid polypeptide reads, in one-letter code: DNA-directed RNA polymerase subunit beta (1343 aa).

This sequence belongs to the RNA polymerase beta chain family. As to quaternary structure, the RNAP catalytic core consists of 2 alpha, 1 beta, 1 beta' and 1 omega subunit. When a sigma factor is associated with the core the holoenzyme is formed, which can initiate transcription.

It catalyses the reaction RNA(n) + a ribonucleoside 5'-triphosphate = RNA(n+1) + diphosphate. Its function is as follows. DNA-dependent RNA polymerase catalyzes the transcription of DNA into RNA using the four ribonucleoside triphosphates as substrates. This Haemophilus influenzae (strain PittGG) protein is DNA-directed RNA polymerase subunit beta.